The chain runs to 411 residues: Lysosome-associated membrane glycoprotein 3 (411 aa).

The N-terminal stretch at 1-21 (MPGQISAVAVLFLSLTVILHG) is a signal peptide. Topologically, residues 22 to 376 (YQIREKEFPK…NVNECLSDYT (355 aa)) are lumenal. Polar residues predominate over residues 172-192 (HKSTTNQRPTLSTNVLGTSTP). The disordered stretch occupies residues 172–204 (HKSTTNQRPTLSTNVLGTSTPTHKDRSTTSPVP). Asn227 is a glycosylation site (N-linked (GlcNAc...) asparagine). 2 cysteine pairs are disulfide-bonded: Cys232/Cys269 and Cys334/Cys371. A helical transmembrane segment spans residues 377–397 (VVLPMVAIIVVVICVVGLSVY). The Cytoplasmic segment spans residues 398–411 (KIRQRHQSSAYQRI).

This sequence belongs to the LAMP family. In terms of assembly, monomer. Interacts with FURIN.

It localises to the cell surface. The protein resides in the lysosome membrane. Its subcellular location is the cytoplasmic vesicle membrane. The protein localises to the early endosome membrane. In terms of biological role, lysosomal membrane glycoprotein which plays a role in the unfolded protein response (UPR) that contributes to protein degradation and cell survival during proteasomal dysfunction. Plays a role in the process of fusion of the lysosome with the autophagosome, thereby modulating the autophagic process. Promotes hepatocellular lipogenesis through activation of the PI3K/Akt pathway. May also play a role in dendritic cell function and in adaptive immunity. This Mus musculus (Mouse) protein is Lysosome-associated membrane glycoprotein 3 (Lamp3).